We begin with the raw amino-acid sequence, 544 residues long: Chaperonin GroEL (544 aa).

ATP is bound by residues 29–32 (TLGP), 86–90 (DGTTT), glycine 413, 476–478 (NAA), and aspartate 492.

It belongs to the chaperonin (HSP60) family. In terms of assembly, forms a cylinder of 14 subunits composed of two heptameric rings stacked back-to-back. Interacts with the co-chaperonin GroES.

It is found in the cytoplasm. It localises to the secreted. It carries out the reaction ATP + H2O + a folded polypeptide = ADP + phosphate + an unfolded polypeptide.. Its function is as follows. Together with its co-chaperonin GroES, plays an essential role in assisting protein folding. The GroEL-GroES system forms a nano-cage that allows encapsulation of the non-native substrate proteins and provides a physical environment optimized to promote and accelerate protein folding. The sequence is that of Chaperonin GroEL from Bacillus subtilis (strain 168).